We begin with the raw amino-acid sequence, 148 residues long: Probable 4-amino-4-deoxy-L-arabinose-phosphoundecaprenol flippase subunit ArnF (148 aa).

The Cytoplasmic segment spans residues 1–23 (MRGDNTGVGKEPAVTERPAIKGY). Residues 24–44 (LYVLGSILLVTLAQLAMKWGV) traverse the membrane as a helical segment. Over 45-63 (MQLPAWQASLDIMLAHPVP) the chain is Periplasmic. The chain crosses the membrane as a helical span at residues 64 to 84 (LLVITAGVGCYALSLLCWLAA). The Cytoplasmic portion of the chain corresponds to 85 to 91 (LHFTPLN). The chain crosses the membrane as a helical span at residues 92–112 (IAYPLLSTSYALVYLLAVSIP). The Periplasmic segment spans residues 113 to 117 (SFAEP). A helical membrane pass occupies residues 118 to 138 (LEPGKAVGVIFILLGAVLVGI). At 139–148 (KPVGRKRNAH) the chain is on the cytoplasmic side.

Belongs to the ArnF family. In terms of assembly, heterodimer of ArnE and ArnF.

It localises to the cell inner membrane. It functions in the pathway bacterial outer membrane biogenesis; lipopolysaccharide biosynthesis. Its function is as follows. Translocates 4-amino-4-deoxy-L-arabinose-phosphoundecaprenol (alpha-L-Ara4N-phosphoundecaprenol) from the cytoplasmic to the periplasmic side of the inner membrane. In Aeromonas salmonicida (strain A449), this protein is Probable 4-amino-4-deoxy-L-arabinose-phosphoundecaprenol flippase subunit ArnF.